The chain runs to 105 residues: Protein S100-A11 (105 aa).

Methionine 1 is subject to N-acetylmethionine. N-acetylalanine; in Protein S100-A11, N-terminally processed is present on alanine 2. Lysine 3 is subject to N6-acetyllysine. Serine 5 and serine 6 each carry phosphoserine. Position 10 is a phosphothreonine (threonine 10). EF-hand domains follow at residues 13–49 and 55–90; these read CIES…ELAA and KDPG…LAMA. An N6-acetyllysine modification is found at lysine 27. Ca(2+) contacts are provided by threonine 33, glutamate 38, aspartate 68, asparagine 70, aspartate 72, glutamine 74, and glutamate 79.

The protein belongs to the S-100 family. Homodimer; disulfide-linked. Phosphorylation at Thr-10 by PRKCA significantly suppresses homodimerization and promotes association with NCL/nucleolin which induces nuclear translocation.

It is found in the cytoplasm. It localises to the nucleus. Functionally, facilitates the differentiation and the cornification of keratinocytes. The sequence is that of Protein S100-A11 (S100A11) from Homo sapiens (Human).